Consider the following 71-residue polypeptide: Dermonecrotic toxin LgSicTox-alphaI-Loxn-A (71 aa).

The active site involves H12. Mg(2+) is bound by residues E32, D34, and D48.

Requires Mg(2+) as cofactor. Post-translationally, contains 2 disulfide bonds. As to expression, expressed by the venom gland.

Its subcellular location is the secreted. The enzyme catalyses an N-(acyl)-sphingosylphosphocholine = an N-(acyl)-sphingosyl-1,3-cyclic phosphate + choline. It catalyses the reaction an N-(acyl)-sphingosylphosphoethanolamine = an N-(acyl)-sphingosyl-1,3-cyclic phosphate + ethanolamine. The catalysed reaction is a 1-acyl-sn-glycero-3-phosphocholine = a 1-acyl-sn-glycero-2,3-cyclic phosphate + choline. It carries out the reaction a 1-acyl-sn-glycero-3-phosphoethanolamine = a 1-acyl-sn-glycero-2,3-cyclic phosphate + ethanolamine. Catalyzes the hydrolysis of sphingomyelin. May also act on other phosphatidyl esters. In terms of biological role, dermonecrotic toxins cleave the phosphodiester linkage between the phosphate and headgroup of certain phospholipids (sphingolipid and lysolipid substrates), forming an alcohol (often choline) and a cyclic phosphate. This toxin acts on sphingomyelin (SM). It may also act on ceramide phosphoethanolamine (CPE), lysophosphatidylcholine (LPC) and lysophosphatidylethanolamine (LPE), but not on lysophosphatidylserine (LPS), and lysophosphatidylglycerol (LPG). It acts by transphosphatidylation, releasing exclusively cyclic phosphate products as second products. In vivo, induces dermonecrosis, but is not lethal. Induces hemolysis, vascular permeability, edema, inflammatory response, and platelet aggregation. This chain is Dermonecrotic toxin LgSicTox-alphaI-Loxn-A, found in Loxosceles gaucho (Spider).